The sequence spans 169 residues: Large ribosomal subunit protein uL10 (169 aa).

Belongs to the universal ribosomal protein uL10 family. In terms of assembly, part of the ribosomal stalk of the 50S ribosomal subunit. The N-terminus interacts with L11 and the large rRNA to form the base of the stalk. The C-terminus forms an elongated spine to which L12 dimers bind in a sequential fashion forming a multimeric L10(L12)X complex.

Forms part of the ribosomal stalk, playing a central role in the interaction of the ribosome with GTP-bound translation factors. In Orientia tsutsugamushi (strain Boryong) (Rickettsia tsutsugamushi), this protein is Large ribosomal subunit protein uL10.